Consider the following 132-residue polypeptide: ATP synthase epsilon chain, chloroplastic (132 aa).

Position 2 is an N-acetylthreonine (threonine 2).

The protein belongs to the ATPase epsilon chain family. As to quaternary structure, F-type ATPases have 2 components, CF(1) - the catalytic core - and CF(0) - the membrane proton channel. CF(1) has five subunits: alpha(3), beta(3), gamma(1), delta(1), epsilon(1). CF(0) has three main subunits: a, b and c.

It localises to the plastid. Its subcellular location is the chloroplast thylakoid membrane. Its function is as follows. Produces ATP from ADP in the presence of a proton gradient across the membrane. The chain is ATP synthase epsilon chain, chloroplastic from Arabidopsis thaliana (Mouse-ear cress).